The primary structure comprises 1215 residues: Cellulose synthase-like protein D4 (1215 aa).

2 disordered regions span residues 24 to 46 (GGDA…SLGS) and 206 to 231 (SDTD…ERDQ). Residues 207-222 (DTDESDSVTDDDDDEA) are compositionally biased toward acidic residues. Helical transmembrane passes span 321–341 (AILS…GFFL) and 352–372 (AVWL…SWLL). Active-site residues include Asp452 and Asp905. The next 6 helical transmembrane spans lie at 988 to 1008 (VFLL…KFIV), 1014 to 1034 (TFLA…LLEI), 1060 to 1080 (PAAV…SFTL), 1114 to 1134 (LMVP…VAAA), 1147 to 1167 (LLGG…FAKG), and 1177 to 1197 (TIVF…WVYI).

Belongs to the glycosyltransferase 2 family. Plant cellulose synthase-like D subfamily.

The protein localises to the golgi apparatus membrane. Functionally, thought to be a Golgi-localized beta-glycan synthase that polymerize the backbones of noncellulosic polysaccharides (hemicelluloses) of plant cell wall. This Oryza sativa subsp. japonica (Rice) protein is Cellulose synthase-like protein D4 (CSLD4).